Consider the following 48-residue polypeptide: Large ribosomal subunit protein bL34c (48 aa).

The interval 18-48 (SGFRSRMATPQGRKTIRNRRKKGRKNLTLRR) is disordered. The span at 31-48 (KTIRNRRKKGRKNLTLRR) shows a compositional bias: basic residues.

The protein belongs to the bacterial ribosomal protein bL34 family.

It localises to the plastid. It is found in the chloroplast. This chain is Large ribosomal subunit protein bL34c, found in Phaeodactylum tricornutum (strain CCAP 1055/1).